Consider the following 1210-residue polypeptide: Microtubule-associated tumor suppressor 1 homolog (1210 aa).

5 disordered regions span residues 1-21, 370-404, 446-482, 513-545, and 585-618; these read MNDD…IRDK, DPHI…PYEM, VENG…NTTV, QPKD…LTMM, and HSKN…AGSE. A compositionally biased stretch (basic and acidic residues) spans 370-379; sequence DPHIDSHDND. Ser-375, Ser-380, and Ser-393 each carry phosphoserine. A compositionally biased stretch (polar residues) spans 381 to 398; that stretch reads DIQSSTEELTLRSVSGQR. Positions 446–455 are enriched in basic and acidic residues; that stretch reads VENGPRDAKR. Residues 473–482 show a composition bias toward polar residues; sequence KSATKTNTTV. Residues 524-534 show a composition bias toward low complexity; the sequence is PSPQVTGGSSP. The segment covering 585-605 has biased composition (polar residues); the sequence is HSKNASLGVPRTTSATKSNQE. Phosphoserine is present on Ser-621. The interval 683-771 is disordered; the sequence is SKSLLVGSAP…YEEKPPKQAF (89 aa). Positions 692–702 are enriched in polar residues; that stretch reads PKTSTTPGRSS. A coiled-coil region spans residues 876 to 1171; that stretch reads IQHLLSEREE…RLSMENEELL (296 aa). Phosphoserine is present on residues Ser-1143, Ser-1164, Ser-1185, Ser-1195, Ser-1199, Ser-1201, Ser-1203, Ser-1204, and Ser-1208. Residues 1177–1210 are disordered; the sequence is GDLCSPKRSPTSSAIPFQSPRNSGSFSSPSISPR. Residues 1195-1210 show a composition bias toward low complexity; the sequence is SPRNSGSFSSPSISPR.

Belongs to the MTUS1 family. As to quaternary structure, homodimer. Interacts with AGTR2. Interacts with PTPN6. As to expression, ubiquitously expressed, with highest levels in uterus and adrenal gland.

The protein localises to the mitochondrion. It is found in the golgi apparatus. Its subcellular location is the cell membrane. The protein resides in the nucleus. Cooperates with AGTR2 to inhibit ERK2 activation and cell proliferation. May be required for AGTR2 cell surface expression. Together with PTPN6, induces UBE2V2 expression upon angiotensin-II stimulation. The chain is Microtubule-associated tumor suppressor 1 homolog (Mtus1) from Mus musculus (Mouse).